We begin with the raw amino-acid sequence, 86 residues long: Defensin-like protein 97 (86 aa).

Positions methionine 1–glycine 27 are cleaved as a signal peptide. Intrachain disulfides connect cysteine 31–cysteine 74, cysteine 38–cysteine 60, cysteine 44–cysteine 71, and cysteine 48–cysteine 73.

This sequence belongs to the DEFL family.

It is found in the secreted. The protein is Defensin-like protein 97 (LCR85) of Arabidopsis thaliana (Mouse-ear cress).